Here is a 254-residue protein sequence, read N- to C-terminus: Ribonuclease HII (254 aa).

An RNase H type-2 domain is found at 70–254 (RYICGIDEVG…ASFIKNLTSC (185 aa)). Residues Asp76, Glu77, and Asp168 each coordinate a divalent metal cation.

Belongs to the RNase HII family. It depends on Mn(2+) as a cofactor. The cofactor is Mg(2+).

It is found in the cytoplasm. The catalysed reaction is Endonucleolytic cleavage to 5'-phosphomonoester.. Its function is as follows. Endonuclease that specifically degrades the RNA of RNA-DNA hybrids. This Lachnoclostridium phytofermentans (strain ATCC 700394 / DSM 18823 / ISDg) (Clostridium phytofermentans) protein is Ribonuclease HII.